The chain runs to 110 residues: ATP-dependent Clp protease adapter protein ClpS (110 aa).

It belongs to the ClpS family. In terms of assembly, binds to the N-terminal domain of the chaperone ClpA.

Its function is as follows. Involved in the modulation of the specificity of the ClpAP-mediated ATP-dependent protein degradation. This chain is ATP-dependent Clp protease adapter protein ClpS, found in Bartonella henselae (strain ATCC 49882 / DSM 28221 / CCUG 30454 / Houston 1) (Rochalimaea henselae).